The chain runs to 172 residues: MTYFMFLLLMALVVGLVAVASNPTPYFAALGLVVAAGVGCGVLVGHGGSFLSLVLFLIYLGGMLVVFAYAALAAEPFPEAWGSRSVLGYVLVYLLGVGLVAGIFWGGWYEGSWVVVDGLKEFSVLRGDISGVAVMYSSGGGMLVICAWVLLLTLLVVLELTRGLSRGALRAV.

A run of 5 helical transmembrane segments spans residues 1-21, 25-45, 53-73, 86-106, and 140-160; these read MTYFMFLLLMALVVGLVAVAS, PYFAALGLVVAAGVGCGVLVG, LVLFLIYLGGMLVVFAYAALA, VLGYVLVYLLGVGLVAGIFWG, and GGMLVICAWVLLLTLLVVLEL.

Belongs to the complex I subunit 6 family.

The protein localises to the mitochondrion membrane. The catalysed reaction is a ubiquinone + NADH + 5 H(+)(in) = a ubiquinol + NAD(+) + 4 H(+)(out). Functionally, core subunit of the mitochondrial membrane respiratory chain NADH dehydrogenase (Complex I) that is believed to belong to the minimal assembly required for catalysis. Complex I functions in the transfer of electrons from NADH to the respiratory chain. The immediate electron acceptor for the enzyme is believed to be ubiquinone. The protein is NADH-ubiquinone oxidoreductase chain 6 (MT-ND6) of Cyprinus carpio (Common carp).